The sequence spans 263 residues: Acetylglutamate kinase (263 aa).

Substrate is bound by residues 49 to 50, R71, and N163; that span reads GG.

The protein belongs to the acetylglutamate kinase family. ArgB subfamily.

It is found in the cytoplasm. The catalysed reaction is N-acetyl-L-glutamate + ATP = N-acetyl-L-glutamyl 5-phosphate + ADP. Its pathway is amino-acid biosynthesis; L-arginine biosynthesis; N(2)-acetyl-L-ornithine from L-glutamate: step 2/4. Functionally, catalyzes the ATP-dependent phosphorylation of N-acetyl-L-glutamate. This Moritella abyssi protein is Acetylglutamate kinase.